Here is a 195-residue protein sequence, read N- to C-terminus: uncharacterized protein (195 aa).

An N-terminal signal peptide occupies residues 1 to 17 (MKASLITAFVLPLLALA). N75 carries N-linked (GlcNAc...) asparagine glycosylation.

The protein localises to the secreted. This is an uncharacterized protein from Arthroderma benhamiae (strain ATCC MYA-4681 / CBS 112371) (Trichophyton mentagrophytes).